Consider the following 4834-residue polypeptide: E3 ubiquitin-protein ligase HERC2 (4834 aa).

Positions 50–88 are disordered; the sequence is TESTQNGELPPRKDDSVEPSGTKKEDLNDKEKKDEEETP. The segment covering 59–84 has biased composition (basic and acidic residues); the sequence is PPRKDDSVEPSGTKKEDLNDKEKKDE. A Phosphothreonine modification is found at Thr-272. One copy of the RCC1 1-1 repeat lies at 415 to 461; sequence PTSHKGSLQEVIGWGLIGWKYYANVIGPIQCEGLANLGVTQIACAEK. The stretch at 462 to 512 is one RCC1 1-2 repeat; it reads RFLILSRNGRVYTQAYNSDTLAPQLVQGLASRNIVKIAAHSDGHHYLALAA. One copy of the RCC1 1-3 repeat lies at 513–568; that stretch reads TGEVYSWGCGDGGRLGHGDTVPLEEPKVISAFSGKQAGKHVVHIACGSTYSAAITA. One copy of the RCC1 1-4 repeat lies at 569–620; sequence EGELYTWGRGNYGRLGHGSSEDEAIPMLVAGLKGLKVIDVACGSGDAQTLAV. One copy of the RCC1 1-5 repeat lies at 623 to 674; that stretch reads NGQVWSWGDGDYGKLGRGGSDGCKTPKLIEKLQDLDVVKVRCGSQFSIALTK. Thr-647 is modified (phosphothreonine). The RCC1 1-6 repeat unit spans residues 675–726; the sequence is DGQVYSWGKGDNQRLGHGTEEHVRYPKLLEGLQGKKVIDVAAGSTHCLALTE. An RCC1 1-7 repeat occupies 728–778; the sequence is SEVHSWGSNDQCQHFDTLRVTKPEPAALPGLDTKHIVGIACGPAQSFAWSS. Positions 948–980 form a coiled coil; the sequence is LHAAITAEIQDIEAKKEAQKEKEIDEQEANAST. The Cytochrome b5 heme-binding domain maps to 1207–1283; it reads VTLIRKADLE…MHAFCVGQYL (77 aa). Residues 1555–1575 form a disordered region; it reads RKKRVPKKPESTDDEEKIGNE. A compositionally biased stretch (acidic residues) spans 1566–1575; sequence TDDEEKIGNE. Ser-1577 carries the phosphoserine modification. Residues 1859 to 1932 enclose the MIB/HERC2 domain; it reads SGPELAAMMK…KYDLKLAELP (74 aa). A disordered region spans residues 1933 to 1958; sequence AAAQPSAEDSDTEDDSEAEQTERNIH. Over residues 1940 to 1951 the composition is skewed to acidic residues; sequence EDSDTEDDSEAE. Ser-1942 is modified (phosphoserine). Thr-1944 is subject to Phosphothreonine. Ser-2454 is modified (phosphoserine). Positions 2554–2630 constitute a CPH domain; sequence RADFLSNDDY…RYIHVELIGY (77 aa). The ZZ-type zinc-finger motif lies at 2703–2755; it reads HPGVTCDGCQMFPINGSRFKCRNCDDFDFCETCFKTKKHNTRHTFGRINEPGQ. Zn(2+)-binding residues include Cys-2708, Cys-2711, Cys-2723, Cys-2726, Cys-2732, Cys-2735, His-2741, and His-2745. Residues 2759–2936 enclose the DOC domain; that stretch reads FCGRSGKQLK…ASDNEEEEDE (178 aa). Ser-2928 carries the phosphoserine modification. Residues 2958–3009 form an RCC1 2-1 repeat; the sequence is RTKVFVWGLNDKDQLGGLKGSKIKVPSFSETLSALNVVQVAGGSKSLFAVTV. One copy of the RCC1 2-2 repeat lies at 3010-3064; it reads EGKVYACGEATNGRLGLGISSGTVPIPRQITALSSYVVKKVAVHSGGRHATALTV. Residues 3065–3116 form an RCC1 2-3 repeat; the sequence is DGKVFSWGEGDDGKLGHFSRMNCDKPRLIEALKTKRIRDIACGSSHSAALTS. The stretch at 3118-3168 is one RCC1 2-4 repeat; that stretch reads GELYTWGLGEYGRLGHGDNTTQLKPKMVKVLLGHRVIQVACGSRDAQTLAL. The stretch at 3171–3222 is one RCC1 2-5 repeat; it reads EGLVFSWGDGDFGKLGRGGSEGCNIPQNIERLNGQGVCQIECGAQFSLALTK. The stretch at 3224–3274 is one RCC1 2-6 repeat; it reads GVVWTWGKGDYFRLGHGSDVHVRKPQVVEGLRGKKIVHVAVGALHCLAVTD. The stretch at 3275 to 3326 is one RCC1 2-7 repeat; it reads SGQVYAWGDNDHGQQGNGTTTVNRKPTLVQGLEGQKITRVACGSSHSVAWTT. Polar residues-rich tracts occupy residues 3602–3611 and 3618–3629; these read SQSGRLSSQP and HPYTDDTSTSGT. Residues 3602 to 3629 form a disordered region; sequence SQSGRLSSQPVVVESSHPYTDDTSTSGT. One copy of the RCC1 3-1 repeat lies at 3951-4002; that stretch reads SGTIYGWGHNHRGQLGGIEGAKVKVPTPCEALATLRPVQLIGGEQTLFAVTA. An RCC1 3-2 repeat occupies 4004-4056; it reads GKLYATGYGAGGRLGIGGTESVSTPTLLESIQHVFIKKVAVNSGGKHCLALSS. An RCC1 3-3 repeat occupies 4058–4108; that stretch reads GEVYSWGEAEDGKLGHGNRSPCDRPRVIESLRGIEVVDVAAGGAHSACVTA. The RCC1 3-4 repeat unit spans residues 4110 to 4162; it reads GDLYTWGKGRYGRLGHSDSEDQLKPKLVEALQGHRVVDIACGSGDAQTLCLTD. Residues 4164–4214 form an RCC1 3-5 repeat; that stretch reads DTVWSWGDGDYGKLGRGGSDGCKVPMKIDSLTGLGVVKVECGSQFSVALTK. An RCC1 3-6 repeat occupies 4216 to 4266; sequence GAVYTWGKGDYHRLGHGSDDHVRRPRQVQGLQGKKVIAIATGSLHCVCCTE. An RCC1 3-7 repeat occupies 4268–4318; that stretch reads GEVYTWGDNDEGQLGDGTTNAIQRPRLVAALQGKKVNRVACGSAHTLAWST. The region spanning 4457–4794 is the HECT domain; that stretch reads DSLLLPHRVW…IHFCKSIDTD (338 aa). Cys-4762 acts as the Glycyl thioester intermediate in catalysis. Residues 4804 to 4834 form a disordered region; it reads EPAADDSSDDSDNEDVDSFASDSTQDYLTGH. The span at 4806 to 4820 shows a compositional bias: acidic residues; it reads AADDSSDDSDNEDVD. 3 positions are modified to phosphoserine: Ser-4810, Ser-4811, and Ser-4814. Polar residues predominate over residues 4823–4834; the sequence is ASDSTQDYLTGH. Position 4827 is a phosphothreonine (Thr-4827).

Interacts (when phosphorylated at Thr-4827 and sumoylated) with RNF8 (via FHA domain); this interaction increases after ionizing radiation (IR) treatment. Interacts with XPA. Interacts with NEURL4. Via its interaction with NEURL4, may indirectly interact with CCP110 and CEP97. Phosphorylation at Thr-4827 is required for interaction with RNF8. Post-translationally, sumoylated with SUMO1 by PIAS4 in response to double-strand breaks (DSBs), promoting the interaction with RNF8.

It localises to the cytoplasm. The protein resides in the cytoskeleton. It is found in the microtubule organizing center. The protein localises to the centrosome. Its subcellular location is the centriole. It localises to the nucleus. It catalyses the reaction S-ubiquitinyl-[E2 ubiquitin-conjugating enzyme]-L-cysteine + [acceptor protein]-L-lysine = [E2 ubiquitin-conjugating enzyme]-L-cysteine + N(6)-ubiquitinyl-[acceptor protein]-L-lysine.. Its pathway is protein modification; protein ubiquitination. Functionally, E3 ubiquitin-protein ligase that regulates ubiquitin-dependent retention of repair proteins on damaged chromosomes. Recruited to sites of DNA damage in response to ionizing radiation (IR) and facilitates the assembly of UBE2N and RNF8 promoting DNA damage-induced formation of 'Lys-63'-linked ubiquitin chains. Acts as a mediator of binding specificity between UBE2N and RNF8. Involved in the maintenance of RNF168 levels. E3 ubiquitin-protein ligase that promotes the ubiquitination and proteasomal degradation of XPA which influences the circadian oscillation of DNA excision repair activity. By controlling the steady-state expression of the IGF1R receptor, indirectly regulates the insulin-like growth factor receptor signaling pathway. Also modulates iron metabolism by regulating the basal turnover of FBXL5. This chain is E3 ubiquitin-protein ligase HERC2, found in Homo sapiens (Human).